The primary structure comprises 1051 residues: Probable valine--tRNA ligase, mitochondrial (1051 aa).

Residues 1–20 constitute a mitochondrion transit peptide; it reads MNKLLFLSKKSSTSNLYRFY. A 'HIGH' region motif is present at residues 71–81; sequence PNVTGSLHIGH. The 'KMSKS' region motif lies at 606–610; it reads KMSKS. Lys-609 contributes to the ATP binding site. Residues 972–1019 are a coiled coil; that stretch reads KELQISIEFDKEINNQLNQKLINPNQSNDKKILKLENFIKQLQDEIDN.

It belongs to the class-I aminoacyl-tRNA synthetase family.

It localises to the mitochondrion. The catalysed reaction is tRNA(Val) + L-valine + ATP = L-valyl-tRNA(Val) + AMP + diphosphate. The chain is Probable valine--tRNA ligase, mitochondrial (valS2) from Dictyostelium discoideum (Social amoeba).